The chain runs to 222 residues: Deoxyribose-phosphate aldolase (222 aa).

The active-site Proton donor/acceptor is the Asp94. Lys156 acts as the Schiff-base intermediate with acetaldehyde in catalysis. The Proton donor/acceptor role is filled by Lys185.

The protein belongs to the DeoC/FbaB aldolase family. DeoC type 1 subfamily.

Its subcellular location is the cytoplasm. The catalysed reaction is 2-deoxy-D-ribose 5-phosphate = D-glyceraldehyde 3-phosphate + acetaldehyde. It participates in carbohydrate degradation; 2-deoxy-D-ribose 1-phosphate degradation; D-glyceraldehyde 3-phosphate and acetaldehyde from 2-deoxy-alpha-D-ribose 1-phosphate: step 2/2. Its function is as follows. Catalyzes a reversible aldol reaction between acetaldehyde and D-glyceraldehyde 3-phosphate to generate 2-deoxy-D-ribose 5-phosphate. This is Deoxyribose-phosphate aldolase from Malacoplasma penetrans (strain HF-2) (Mycoplasma penetrans).